Here is a 176-residue protein sequence, read N- to C-terminus: Isopentenyl-diphosphate Delta-isomerase (176 aa).

Mn(2+) is bound by residues His22 and His28. The Nudix hydrolase domain maps to 26-160 (LRHKAVSVFV…PERYTPWLRI (135 aa)). Cys62 is a catalytic residue. A Mn(2+)-binding site is contributed by His64. Glu82 lines the Mg(2+) pocket. Residues Glu108 and Glu110 each coordinate Mn(2+). The active site involves Glu110.

The protein belongs to the IPP isomerase type 1 family. Mg(2+) serves as cofactor. The cofactor is Mn(2+).

Its subcellular location is the cytoplasm. The enzyme catalyses isopentenyl diphosphate = dimethylallyl diphosphate. The protein operates within isoprenoid biosynthesis; dimethylallyl diphosphate biosynthesis; dimethylallyl diphosphate from isopentenyl diphosphate: step 1/1. It functions in the pathway porphyrin-containing compound metabolism; chlorophyll biosynthesis. Its function is as follows. Catalyzes the 1,3-allylic rearrangement of the homoallylic substrate isopentenyl (IPP) to its highly electrophilic allylic isomer, dimethylallyl diphosphate (DMAPP). This chain is Isopentenyl-diphosphate Delta-isomerase, found in Dinoroseobacter shibae (strain DSM 16493 / NCIMB 14021 / DFL 12).